A 958-amino-acid polypeptide reads, in one-letter code: Translation initiation factor IF-2 (958 aa).

Disordered regions lie at residues 67–95 (APAA…APAP) and 111–355 (PAPA…VPRG). A compositionally biased stretch (pro residues) spans 75–95 (APAPGPAAPKAPAPAPAAPAP). Positions 140–161 (PAPARQGGQAPRPGGPRPGNNP) are enriched in low complexity. Positions 195–206 (RGERRNDGERPG) are enriched in basic and acidic residues. Residues 209 to 221 (RPAAGAGGPRPAA) show a composition bias toward low complexity. The span at 228–241 (PGAPRPGAPRPGAP) shows a compositional bias: pro residues. Over residues 268 to 325 (GGAGRPGGAGRPGGGPGRPGGAPGAGTGGGAPAGGGFGKGGRGRGGTQGAFGKGGAGR) the composition is skewed to gly residues. Residues 326-335 (GKQRKSKRAK) are compositionally biased toward basic residues. The region spanning 450–621 (ARAPVVTVMG…AVLLTADAAL (172 aa)) is the tr-type G domain. Positions 459–466 (GHVDHGKT) are G1. A GTP-binding site is contributed by 459 to 466 (GHVDHGKT). Residues 484-488 (GITQH) are G2. The interval 509–512 (DTPG) is G3. GTP contacts are provided by residues 509–513 (DTPGH) and 563–566 (NKID). The G4 stretch occupies residues 563-566 (NKID). The interval 599-601 (SAR) is G5.

This sequence belongs to the TRAFAC class translation factor GTPase superfamily. Classic translation factor GTPase family. IF-2 subfamily.

Its subcellular location is the cytoplasm. In terms of biological role, one of the essential components for the initiation of protein synthesis. Protects formylmethionyl-tRNA from spontaneous hydrolysis and promotes its binding to the 30S ribosomal subunits. Also involved in the hydrolysis of GTP during the formation of the 70S ribosomal complex. This chain is Translation initiation factor IF-2, found in Paenarthrobacter aurescens (strain TC1).